We begin with the raw amino-acid sequence, 318 residues long: Zinc chaperone YjiA (318 aa).

11–19 (GFLGAGKTT) contributes to the GTP binding site. Zn(2+) is bound by residues Glu-37, Glu-42, Cys-66, Glu-74, and His-114. The short motif at 64–67 (CICC) is the CXCC motif element. Residue Asp-161 participates in GTP binding. Zn(2+) is bound by residues Glu-167, His-170, and His-187. Residues 224-315 (ISSIVVELDY…EEEIRAAFAG (92 aa)) form the CobW C-terminal domain.

The protein belongs to the SIMIBI class G3E GTPase family. ZNG1 subfamily. As to quaternary structure, monomer in the apo form. Metal binding induces oligomerization. Forms homodimers and higher oligomers.

The enzyme catalyses GTP + H2O = GDP + phosphate + H(+). Its activity is regulated as follows. GTPase activity is inhibited by metal binding. Activity is decreased in the presence of Co(II) or Ni(II), and is completely inhibited in the presence of Zn(II). Its function is as follows. Zinc chaperone that directly transfers zinc cofactor to target proteins, thereby activating them. Zinc is transferred from the CXCC motif in the GTPase domain to the zinc binding site in target proteins in a process requiring GTP hydrolysis. The polypeptide is Zinc chaperone YjiA (yjiA) (Escherichia coli (strain K12)).